We begin with the raw amino-acid sequence, 241 residues long: uncharacterized protein (241 aa).

6 helical membrane passes run 1-21, 43-63, 75-95, 108-128, 160-180, and 200-220; these read MMMALQIFIKILPIMFFGILL, FPIIAVFFVSSTSGSFLLKNL, LPIYFLGMFVFGIHIILFYAI, IYVLIKFLVTCNYLIISVLML, VLTSFVPSVLIITYLIEHGLL, and ILVIVLTGLATISGAIGIASG.

This sequence to M.jannaschii MJ0871, MJ0880 and MJ1556.

It localises to the cell membrane. This is an uncharacterized protein from Methanocaldococcus jannaschii (strain ATCC 43067 / DSM 2661 / JAL-1 / JCM 10045 / NBRC 100440) (Methanococcus jannaschii).